The primary structure comprises 268 residues: Mitochondrial distribution and morphology protein 12 (268 aa).

Residues 1–256 (MSFEINWQDL…WPSWINLDFN (256 aa)) form the SMP-LTD domain. Residues 75–94 (LPKDKIPEESDSGCQSADGE) are disordered.

Belongs to the MDM12 family. Component of the ER-mitochondria encounter structure (ERMES) or MDM complex, composed of MMM1, MDM10, MDM12 and MDM34. An MMM1 homodimer associates with one molecule of MDM12 on each side in a pairwise head-to-tail manner, and the SMP-LTD domains of MMM1 and MDM12 generate a continuous hydrophobic tunnel for phospholipid trafficking.

It is found in the mitochondrion outer membrane. The protein localises to the endoplasmic reticulum membrane. Component of the ERMES/MDM complex, which serves as a molecular tether to connect the endoplasmic reticulum (ER) and mitochondria. Components of this complex are involved in the control of mitochondrial shape and protein biogenesis, and function in nonvesicular lipid trafficking between the ER and mitochondria. MDM12 is required for the interaction of the ER-resident membrane protein MMM1 and the outer mitochondrial membrane-resident beta-barrel protein MDM10. The MDM12-MMM1 subcomplex functions in the major beta-barrel assembly pathway that is responsible for biogenesis of all mitochondrial outer membrane beta-barrel proteins, and acts in a late step after the SAM complex. The MDM10-MDM12-MMM1 subcomplex further acts in the TOM40-specific pathway after the action of the MDM12-MMM1 complex. Essential for establishing and maintaining the structure of mitochondria and maintenance of mtDNA nucleoids. This is Mitochondrial distribution and morphology protein 12 from Lachancea thermotolerans (strain ATCC 56472 / CBS 6340 / NRRL Y-8284) (Yeast).